A 281-amino-acid polypeptide reads, in one-letter code: Shikimate dehydrogenase (NADP(+)) (281 aa).

Residues 15 to 17 (SKS) and Thr62 contribute to the shikimate site. Residue Lys66 is the Proton acceptor of the active site. Residues Asn87 and Asp102 each contribute to the shikimate site. NADP(+) is bound by residues 127-131 (GAGGS), 151-156 (NRTPER), and Leu217. Tyr219 contributes to the shikimate binding site. Gly241 provides a ligand contact to NADP(+).

Belongs to the shikimate dehydrogenase family. As to quaternary structure, homodimer.

The enzyme catalyses shikimate + NADP(+) = 3-dehydroshikimate + NADPH + H(+). It functions in the pathway metabolic intermediate biosynthesis; chorismate biosynthesis; chorismate from D-erythrose 4-phosphate and phosphoenolpyruvate: step 4/7. Its function is as follows. Involved in the biosynthesis of the chorismate, which leads to the biosynthesis of aromatic amino acids. Catalyzes the reversible NADPH linked reduction of 3-dehydroshikimate (DHSA) to yield shikimate (SA). This is Shikimate dehydrogenase (NADP(+)) from Stenotrophomonas maltophilia (strain R551-3).